Reading from the N-terminus, the 89-residue chain is HssA/B-like protein 16 (89 aa).

It belongs to the hssA/B family.

This Dictyostelium discoideum (Social amoeba) protein is HssA/B-like protein 16 (hssl16).